Reading from the N-terminus, the 470-residue chain is ATP synthase subunit beta (470 aa).

An ATP-binding site is contributed by 155-162; sequence GGAGVGKT.

This sequence belongs to the ATPase alpha/beta chains family. F-type ATPases have 2 components, CF(1) - the catalytic core - and CF(0) - the membrane proton channel. CF(1) has five subunits: alpha(3), beta(3), gamma(1), delta(1), epsilon(1). CF(0) has three main subunits: a(1), b(2) and c(9-12). The alpha and beta chains form an alternating ring which encloses part of the gamma chain. CF(1) is attached to CF(0) by a central stalk formed by the gamma and epsilon chains, while a peripheral stalk is formed by the delta and b chains.

Its subcellular location is the cell membrane. It carries out the reaction ATP + H2O + 4 H(+)(in) = ADP + phosphate + 5 H(+)(out). Produces ATP from ADP in the presence of a proton gradient across the membrane. The catalytic sites are hosted primarily by the beta subunits. The sequence is that of ATP synthase subunit beta from Lacticaseibacillus casei (Lactobacillus casei).